A 151-amino-acid chain; its full sequence is Cytochrome c-type biogenesis protein CcmE (151 aa).

Residues 1-8 (MNPLRRKR) are Cytoplasmic-facing. A helical; Signal-anchor for type II membrane protein membrane pass occupies residues 9 to 29 (LLIILAILVGVGVAVGLALSA). Over 30 to 151 (LQQNINLFYT…QSAPTPAKEG (122 aa)) the chain is Periplasmic. Heme-binding residues include H124 and Y128.

The protein belongs to the CcmE/CycJ family.

It is found in the cell inner membrane. Functionally, heme chaperone required for the biogenesis of c-type cytochromes. Transiently binds heme delivered by CcmC and transfers the heme to apo-cytochromes in a process facilitated by CcmF and CcmH. This chain is Cytochrome c-type biogenesis protein CcmE, found in Pseudomonas fluorescens biotype C.